The following is an 86-amino-acid chain: Large ribosomal subunit protein bL27c (86 aa).

The disordered stretch occupies residues 1 to 27; that stretch reads MAHKKGSGSTRNGRDSNSKRLGVKKYG.

Belongs to the bacterial ribosomal protein bL27 family.

Its subcellular location is the plastid. The protein localises to the chloroplast. The chain is Large ribosomal subunit protein bL27c from Pyropia yezoensis (Susabi-nori).